The chain runs to 796 residues: Protein translocase subunit SecA 2 (796 aa).

Residues Gln84, 102-106 (GEGKT), and Asp496 contribute to the ATP site.

The protein belongs to the SecA family. As to quaternary structure, monomer and homodimer. Part of the essential Sec protein translocation apparatus which comprises SecA, SecYEG and auxiliary proteins SecDF. Other proteins may also be involved.

It is found in the cell membrane. It localises to the cytoplasm. The catalysed reaction is ATP + H2O + cellular proteinSide 1 = ADP + phosphate + cellular proteinSide 2.. In terms of biological role, part of the Sec protein translocase complex. Interacts with the SecYEG preprotein conducting channel. Has a central role in coupling the hydrolysis of ATP to the transfer of proteins into and across the cell membrane, serving as an ATP-driven molecular motor driving the stepwise translocation of polypeptide chains across the membrane. The chain is Protein translocase subunit SecA 2 from Staphylococcus epidermidis (strain ATCC 35984 / DSM 28319 / BCRC 17069 / CCUG 31568 / BM 3577 / RP62A).